A 65-amino-acid chain; its full sequence is Large ribosomal subunit protein bL35 (65 aa).

The protein belongs to the bacterial ribosomal protein bL35 family.

The chain is Large ribosomal subunit protein bL35 from Psychrobacter sp. (strain PRwf-1).